A 113-amino-acid polypeptide reads, in one-letter code: U11-theraphotoxin-Hhn1s (113 aa).

A signal peptide spans 1–21; it reads MNTVRVTFLLVFVLAVSLGQA. The propeptide occupies 22 to 74; the sequence is DKDENRMEMQEKTEQGKSYLDFAENLLLQKLEELEAKLLEEDSEESRNSRQKR. Residues 61–83 are disordered; it reads EEDSEESRNSRQKRCIGEGVPCD. 3 cysteine pairs are disulfide-bonded: C75/C90, C82/C95, and C89/C110.

The protein belongs to the neurotoxin 14 (magi-1) family. 01 (HNTX-16) subfamily. In terms of tissue distribution, expressed by the venom gland.

It is found in the secreted. Its function is as follows. Probable ion channel inhibitor. In Cyriopagopus hainanus (Chinese bird spider), this protein is U11-theraphotoxin-Hhn1s.